The following is a 357-amino-acid chain: Mannonate dehydratase (357 aa).

It belongs to the mannonate dehydratase family. Fe(2+) is required as a cofactor. Requires Mn(2+) as cofactor.

It catalyses the reaction D-mannonate = 2-dehydro-3-deoxy-D-gluconate + H2O. It participates in carbohydrate metabolism; pentose and glucuronate interconversion. Its function is as follows. Catalyzes the dehydration of D-mannonate. This Enterococcus faecalis (strain ATCC 700802 / V583) protein is Mannonate dehydratase.